The following is a 216-amino-acid chain: Probable GTP-binding protein EngB (216 aa).

Residues 26 to 200 (EGIEIAFAGR…RAKLDTWFAP (175 aa)) form the EngB-type G domain. GTP-binding positions include 34–41 (GRSNAGKS), 61–65 (GRTQL), 79–82 (DLPG), 146–149 (TKAD), and 179–181 (YSS). Mg(2+) is bound by residues Ser41 and Thr63.

This sequence belongs to the TRAFAC class TrmE-Era-EngA-EngB-Septin-like GTPase superfamily. EngB GTPase family. Requires Mg(2+) as cofactor.

Necessary for normal cell division and for the maintenance of normal septation. This Vibrio vulnificus (strain CMCP6) protein is Probable GTP-binding protein EngB.